Here is a 349-residue protein sequence, read N- to C-terminus: Glucose 1-dehydrogenase 1 (349 aa).

Residue Cys39 coordinates Zn(2+). Residue Thr41 coordinates substrate. Zn(2+)-binding residues include His64 and Glu65. Substrate contacts are provided by Glu110 and Glu146. Glu146 is a Zn(2+) binding site. Residues 178–181 (AGPI), 260–262 (LGV), and 289–291 (SVN) each bind NADP(+). Residue Asn291 coordinates substrate.

Belongs to the zinc-containing alcohol dehydrogenase family. Glucose 1-dehydrogenase subfamily. It depends on Zn(2+) as a cofactor.

The catalysed reaction is D-glucose + NAD(+) = D-glucono-1,5-lactone + NADH + H(+). It carries out the reaction D-glucose + NADP(+) = D-glucono-1,5-lactone + NADPH + H(+). Its function is as follows. Catalyzes the NAD(P)(+)-dependent oxidation of D-glucose to D-gluconate via gluconolactone. Can utilize both NAD(+) and NADP(+) as electron acceptor. Is involved in the degradation of glucose through a non-phosphorylative variant of the Entner-Doudoroff pathway. This Caldivirga maquilingensis (strain ATCC 700844 / DSM 13496 / JCM 10307 / IC-167) protein is Glucose 1-dehydrogenase 1.